Here is a 153-residue protein sequence, read N- to C-terminus: Putative pre-16S rRNA nuclease (153 aa).

It belongs to the YqgF nuclease family.

Its subcellular location is the cytoplasm. Could be a nuclease involved in processing of the 5'-end of pre-16S rRNA. The protein is Putative pre-16S rRNA nuclease of Prochlorococcus marinus (strain AS9601).